Consider the following 28-residue polypeptide: Alpha-(1-6)-linked fucose-specific lectin (28 aa).

Homohexamer. Expressed by mycelium-forming spores.

The protein localises to the secreted. In terms of biological role, alpha-(1-6)-linked L-fucose specific lectin. This Rhizopus stolonifer (Rhizopus nigricans) protein is Alpha-(1-6)-linked fucose-specific lectin.